Reading from the N-terminus, the 344-residue chain is Heat-inducible transcription repressor HrcA (344 aa).

It belongs to the HrcA family.

Functionally, negative regulator of class I heat shock genes (grpE-dnaK-dnaJ and groELS operons). Prevents heat-shock induction of these operons. The sequence is that of Heat-inducible transcription repressor HrcA from Geobacillus kaustophilus (strain HTA426).